Consider the following 267-residue polypeptide: 4-hydroxy-tetrahydrodipicolinate reductase (267 aa).

NAD(+) is bound by residues 8 to 13 (GAAGRM) and Asp-34. An NADP(+)-binding site is contributed by Arg-35. NAD(+) is bound by residues 98–100 (GTT) and 122–125 (AANF). His-155 functions as the Proton donor/acceptor in the catalytic mechanism. His-156 contacts (S)-2,3,4,5-tetrahydrodipicolinate. Lys-159 functions as the Proton donor in the catalytic mechanism. Position 165 to 166 (165 to 166 (GT)) interacts with (S)-2,3,4,5-tetrahydrodipicolinate.

This sequence belongs to the DapB family.

It localises to the cytoplasm. It carries out the reaction (S)-2,3,4,5-tetrahydrodipicolinate + NAD(+) + H2O = (2S,4S)-4-hydroxy-2,3,4,5-tetrahydrodipicolinate + NADH + H(+). It catalyses the reaction (S)-2,3,4,5-tetrahydrodipicolinate + NADP(+) + H2O = (2S,4S)-4-hydroxy-2,3,4,5-tetrahydrodipicolinate + NADPH + H(+). The protein operates within amino-acid biosynthesis; L-lysine biosynthesis via DAP pathway; (S)-tetrahydrodipicolinate from L-aspartate: step 4/4. Functionally, catalyzes the conversion of 4-hydroxy-tetrahydrodipicolinate (HTPA) to tetrahydrodipicolinate. The chain is 4-hydroxy-tetrahydrodipicolinate reductase from Pseudomonas entomophila (strain L48).